The chain runs to 499 residues: ALBINO3-like protein 1, chloroplastic (499 aa).

The N-terminal 45 residues, 1 to 45 (MSSTISLKPTHLILSSFSTGKVLQFRRSRFSHTPSSSSSRYRTLV), are a transit peptide targeting the chloroplast. 4 helical membrane-spanning segments follow: residues 115 to 135 (LSTV…TVLV), 184 to 204 (LAGI…PVWI), 263 to 283 (LAYL…IQIM), and 302 to 322 (LLPL…SLYW). The tract at residues 378–499 (LKIPREKGGE…QQHSHETEKR (122 aa)) is disordered. Basic and acidic residues-rich tracts occupy residues 379-420 (KIPR…RQKA), 430-452 (DKAH…KKTE), and 486-499 (HDTE…TEKR). A coiled-coil region spans residues 397–436 (GERFRLLKEQEAKRRREKEERQKAEAALSNQNTDKAHEQD).

This sequence belongs to the OXA1/ALB3/YidC (TC 2.A.9.2) family. In terms of assembly, homodimer. Interacts with ALB3. Interacts with STIC2. In terms of tissue distribution, highly expressed in green tissues.

Its subcellular location is the plastid. The protein localises to the chloroplast thylakoid membrane. Functionally, required for the insertion of some light harvesting chlorophyll-binding proteins (LHCP) into the chloroplast thylakoid membrane. Plays a role in the accumulation of some cytochrome b6f components in the thylakoid membrane. Required for the assembly and/or stability of the F(1)F(0) ATP synthase in chloroplast thylakoid membranes. Functions to stabilize or promote assembly of F(1) during its attachment to the membrane-embedded F(0) part. Participates with STIC2 in thylakoid protein targeting. May function with a specific subset of thylakoidal proteins. The chain is ALBINO3-like protein 1, chloroplastic from Arabidopsis thaliana (Mouse-ear cress).